The chain runs to 520 residues: U3 small nucleolar RNA-associated protein 15 homolog (520 aa).

7 WD repeats span residues Lys36 to Thr75, Arg78 to Gln117, Gly120 to Ser159, Glu162 to Thr202, Glu204 to Val242, Asn246 to Ser285, and Asn287 to Lys326.

In terms of assembly, part of the small subunit (SSU) processome, composed of more than 70 proteins and the RNA chaperone small nucleolar RNA (snoRNA) U3. May be a component of the proposed t-UTP subcomplex of the ribosomal small subunit (SSU) processome.

Its subcellular location is the nucleus. The protein resides in the nucleolus. In terms of biological role, ribosome biogenesis factor. Involved in nucleolar processing of pre-18S ribosomal RNA. Required for optimal pre-ribosomal RNA transcription by RNA polymerase I. Part of the small subunit (SSU) processome, first precursor of the small eukaryotic ribosomal subunit. During the assembly of the SSU processome in the nucleolus, many ribosome biogenesis factors, an RNA chaperone and ribosomal proteins associate with the nascent pre-rRNA and work in concert to generate RNA folding, modifications, rearrangements and cleavage as well as targeted degradation of pre-ribosomal RNA by the RNA exosome. This Gallus gallus (Chicken) protein is U3 small nucleolar RNA-associated protein 15 homolog (UTP15).